The following is a 380-amino-acid chain: Negative elongation factor E (380 aa).

Residues 7–36 are a coiled coil; the sequence is GLSEEEEALQKKFNKLKKKKKALLALKKQS. Positions 30-43 are enriched in low complexity; the sequence is LALKKQSSSSTTSQ. Residues 30 to 67 form a disordered region; the sequence is LALKKQSSSSTTSQGGVKRSLSEQPVMDTATATEQAKQ. Phosphoserine is present on S51. A Glycyl lysine isopeptide (Lys-Gly) (interchain with G-Cter in SUMO1); alternate cross-link involves residue K78. K78 participates in a covalent cross-link: Glycyl lysine isopeptide (Lys-Gly) (interchain with G-Cter in SUMO2); alternate. Positions 79-258 are disordered; that stretch reads AETKNSGFKR…SDSFPERRAP (180 aa). K82 is covalently cross-linked (Glycyl lysine isopeptide (Lys-Gly) (interchain with G-Cter in SUMO2)). A compositionally biased stretch (basic and acidic residues) spans 90-101; the sequence is RTLEGKLKDPEK. Phosphoserine occurs at positions 113 and 115. E122 carries the post-translational modification PolyADP-ribosyl glutamic acid. A phosphoserine mark is found at S131 and S139. Residue E151 is modified to PolyADP-ribosyl glutamic acid. At S165 the chain carries Phosphoserine. The residue at position 172 (E172) is a PolyADP-ribosyl glutamic acid. Phosphoserine is present on S179. Phosphoserine; by CDK9 occurs at positions 181, 185, and 187. Repeat copies occupy residues 184–185, 186–187, 188–189, and 190–191. The interval 184-243 is 30 X 2 AA approximate tandem repeats of R-[DSNE]; the sequence is RSRSRDRSHERNRDRDRDRERDRDRDRDRDRERDRDRDRDRDRDRERDRDRERDRDRDRE. The segment covering 186–256 has biased composition (basic and acidic residues); the sequence is RSRDRSHERN…RRSDSFPERR (71 aa). S191 is modified (phosphoserine; by CDK9). A 5; approximate repeat occupies 192 to 193; that stretch reads HE. 25 tandem repeats follow at residues 194–195, 196–197, 198–199, 200–201, 202–203, 204–205, 206–207, 208–209, 210–211, 212–213, 214–215, 216–217, 218–219, 220–221, 222–223, 224–225, 226–227, 228–229, 230–231, 232–233, 234–235, 236–237, 238–239, 240–241, and 242–243. Phosphoserine is present on residues S249 and S251. The region spanning 262–332 is the RRM domain; it reads NTLYVYGEDM…VQLKVNIARK (71 aa). 2 positions are modified to phosphothreonine: T272 and T274. Phosphoserine is present on residues S281 and S353. The residue at position 374 (E374) is a PolyADP-ribosyl glutamic acid.

It belongs to the RRM NELF-E family. In terms of assembly, the NELF complex is composed of NELFA, NELFB, NELFCD (isoform NELF-C or isoform NELF-D) and NELFE. Interacts with NELFB. (Microbial infection) Binds to the HIV-1 TAR RNA which is located in the long terminal repeat (LTR) of HIV-1. In terms of processing, phosphorylated by the P-TEFb complex at sites next to its RNA recognition motif, promoting its release from chromatin. Sumoylated. Post-translationally, poly-ADP-ribosylated by PARP1, thereby preventing RNA-binding and relieving transcription pausing. As to expression, widely expressed. Expressed in heart, brain, lung, placenta, liver, skeletal muscle, kidney and pancreas.

Its subcellular location is the nucleus. It is found in the chromosome. In terms of biological role, essential component of the NELF complex, a complex that negatively regulates the elongation of transcription by RNA polymerase II. The NELF complex, which acts via an association with the DSIF complex and causes transcriptional pausing, is counteracted by the P-TEFb kinase complex. Provides the strongest RNA binding activity of the NELF complex and may initially recruit the NELF complex to RNA. (Microbial infection) The NELF complex is involved in HIV-1 latency possibly involving recruitment of PCF11 to paused RNA polymerase II. The protein is Negative elongation factor E (NELFE) of Homo sapiens (Human).